The sequence spans 373 residues: Methylmalonyl-CoA decarboxylase subunit beta (373 aa).

10 consecutive transmembrane segments (helical) span residues Phe-17–Leu-37, Ala-38–Ala-58, Ile-81–Ala-101, Leu-106–Leu-126, Glu-132–Thr-152, Pro-156–Ile-176, Ile-206–Leu-226, Val-257–Leu-277, Ile-280–Phe-300, and Phe-343–Ala-363.

The protein belongs to the GcdB/MmdB/OadB family. As to quaternary structure, the methylmalonyl-CoA decarboxylase is composed of five subunits: the carboxyltransferase alpha subunit (MmdA), the tunnel beta subunit (MmdB), the biotin-containing gamma subunit (MmdC), and the delta (MmdD) and epsilon (MmdE) subunits. In terms of processing, the N-terminus is blocked.

The protein localises to the cell membrane. It catalyses the reaction (S)-methylmalonyl-CoA + Na(+)(in) + H(+)(out) = propanoyl-CoA + Na(+)(out) + CO2. Completely inhibited by avidin. Tunnel subunit of the sodium ion pump methylmalonyl-CoA decarboxylase, which converts the chemical energy of a decarboxylation reaction into an electrochemical gradient of Na(+) ions across the cytoplasmic membrane, thereby creating a sodium ion motive force that is used for ATP synthesis. The beta subunit catalyzes the decarboxylation of the carboxybiotin carrier protein and the coupled export of Na(+) ions. Can also convert malonyl-CoA into acetyl-CoA. The chain is Methylmalonyl-CoA decarboxylase subunit beta from Veillonella parvula (Staphylococcus parvulus).